The primary structure comprises 245 residues: 8-amino-3,8-dideoxy-manno-octulosonate cytidylyltransferase (245 aa).

This sequence belongs to the KdsB family.

The protein resides in the cytoplasm. It catalyses the reaction 8-amino-3,8-dideoxy-alpha-D-manno-octulosonate + CTP = CMP-8-amino-3,8-dideoxy-alpha-D-manno-oct-2-ulosonate + diphosphate. Its pathway is bacterial outer membrane biogenesis; lipopolysaccharide biosynthesis. Activates KDO8N (a required 8-carbon sugar) for incorporation into bacterial lipopolysaccharide in the Shewanella genus. In Shewanella baltica (strain OS185), this protein is 8-amino-3,8-dideoxy-manno-octulosonate cytidylyltransferase.